We begin with the raw amino-acid sequence, 312 residues long: Ribonuclease Z (312 aa).

Histidine 63, histidine 65, aspartate 67, histidine 68, histidine 140, aspartate 211, and histidine 269 together coordinate Zn(2+). Aspartate 67 (proton acceptor) is an active-site residue.

Belongs to the RNase Z family. Homodimer. Zn(2+) serves as cofactor.

The catalysed reaction is Endonucleolytic cleavage of RNA, removing extra 3' nucleotides from tRNA precursor, generating 3' termini of tRNAs. A 3'-hydroxy group is left at the tRNA terminus and a 5'-phosphoryl group is left at the trailer molecule.. Its function is as follows. Zinc phosphodiesterase, which displays some tRNA 3'-processing endonuclease activity. Probably involved in tRNA maturation, by removing a 3'-trailer from precursor tRNA. The polypeptide is Ribonuclease Z (Shouchella clausii (strain KSM-K16) (Alkalihalobacillus clausii)).